The following is a 714-amino-acid chain: Solute carrier family 12 member 8 (714 aa).

6 helical membrane-spanning segments follow: residues 37 to 60 (VLFG…VLFL), 72 to 93 (LLGM…LSGI), 99 to 116 (SSIG…VLGG), 123 to 142 (GLLY…TGFA), 154 to 173 (IWAV…GINL), and 185 to 205 (LLLF…FTHL). Residue N221 is glycosylated (N-linked (GlcNAc...) asparagine). 5 helical membrane-spanning segments follow: residues 233 to 254 (FFTV…FNMG), 266 to 289 (LGSL…LGAI), 309 to 331 (GFLF…LYGA), 360 to 377 (PVAA…FVFV), and 383 to 403 (LAPI…YSYF). Disordered regions lie at residues 471-503 (KLES…TLQD) and 530-550 (GQES…PEGT). Residues 533-548 (SCWNKQTSKSEGTQPE) are compositionally biased toward polar residues. Helical transmembrane passes span 593–616 (CNPW…QWVY) and 622–643 (GVAA…LGSA).

The protein belongs to the SLC12A transporter family. In terms of tissue distribution, ubiquitous with very low level in normal skin.

The protein localises to the membrane. Cation/chloride cotransporter that may play a role in the control of keratinocyte proliferation. The sequence is that of Solute carrier family 12 member 8 (SLC12A8) from Homo sapiens (Human).